Reading from the N-terminus, the 467-residue chain is tRNA-2-methylthio-N(6)-dimethylallyladenosine synthase (467 aa).

A disordered region spans residues Met-1–Ala-20. The region spanning Arg-23–Gly-143 is the MTTase N-terminal domain. Cys-32, Cys-68, Cys-106, Cys-184, Cys-188, and Cys-191 together coordinate [4Fe-4S] cluster. The 233-residue stretch at Arg-170–Ala-402 folds into the Radical SAM core domain. The region spanning Asp-405–Ala-467 is the TRAM domain.

Belongs to the methylthiotransferase family. MiaB subfamily. In terms of assembly, monomer. [4Fe-4S] cluster serves as cofactor.

The protein localises to the cytoplasm. It carries out the reaction N(6)-dimethylallyladenosine(37) in tRNA + (sulfur carrier)-SH + AH2 + 2 S-adenosyl-L-methionine = 2-methylsulfanyl-N(6)-dimethylallyladenosine(37) in tRNA + (sulfur carrier)-H + 5'-deoxyadenosine + L-methionine + A + S-adenosyl-L-homocysteine + 2 H(+). Its function is as follows. Catalyzes the methylthiolation of N6-(dimethylallyl)adenosine (i(6)A), leading to the formation of 2-methylthio-N6-(dimethylallyl)adenosine (ms(2)i(6)A) at position 37 in tRNAs that read codons beginning with uridine. The sequence is that of tRNA-2-methylthio-N(6)-dimethylallyladenosine synthase from Brucella melitensis biotype 1 (strain ATCC 23456 / CCUG 17765 / NCTC 10094 / 16M).